The primary structure comprises 158 residues: 6,7-dimethyl-8-ribityllumazine synthase (158 aa).

Residues Phe-22, 57–59 (AVE), and 81–83 (AVI) contribute to the 5-amino-6-(D-ribitylamino)uracil site. 86–87 (GT) contacts (2S)-2-hydroxy-3-oxobutyl phosphate. The active-site Proton donor is His-89. 5-amino-6-(D-ribitylamino)uracil is bound at residue Phe-114. Residue Arg-128 participates in (2S)-2-hydroxy-3-oxobutyl phosphate binding.

Belongs to the DMRL synthase family. As to quaternary structure, forms an icosahedral capsid composed of 60 subunits, arranged as a dodecamer of pentamers.

It carries out the reaction (2S)-2-hydroxy-3-oxobutyl phosphate + 5-amino-6-(D-ribitylamino)uracil = 6,7-dimethyl-8-(1-D-ribityl)lumazine + phosphate + 2 H2O + H(+). It functions in the pathway cofactor biosynthesis; riboflavin biosynthesis; riboflavin from 2-hydroxy-3-oxobutyl phosphate and 5-amino-6-(D-ribitylamino)uracil: step 1/2. Catalyzes the formation of 6,7-dimethyl-8-ribityllumazine by condensation of 5-amino-6-(D-ribitylamino)uracil with 3,4-dihydroxy-2-butanone 4-phosphate. This is the penultimate step in the biosynthesis of riboflavin. In Shewanella loihica (strain ATCC BAA-1088 / PV-4), this protein is 6,7-dimethyl-8-ribityllumazine synthase.